The chain runs to 246 residues: mRNA-decapping protein g5R (246 aa).

A Nudix hydrolase domain is found at 93–239 (QKFRKNWLLP…IIGPAFNFIK (147 aa)). The Nudix box motif lies at 128 to 149 (GKPKEDESDLTCAIREFEEETG). Position 134 (Glu-134) interacts with Mg(2+). Glu-143 serves as the catalytic Nucleophile. Mg(2+) is bound by residues Glu-147 and Asp-169.

It belongs to the Nudix hydrolase family. DIPP subfamily. In terms of assembly, interacts with host RPL23A. It depends on Mg(2+) as a cofactor. Mn(2+) serves as cofactor.

Its subcellular location is the host rough endoplasmic reticulum. The catalysed reaction is diphospho-myo-inositol polyphosphate + H2O = myo-inositol polyphosphate + phosphate.. In terms of biological role, decapping enzyme required for the removal of the 5'-end m7GpppN cap tethered to viral and host mRNAs to allow their decay in cells. May therefore accelerate viral and cellular mRNA turnover to eliminate competing host mRNAs and allow stage-specific synthesis of viral proteins. Acceleration of the turnover of cellular transcripts may even promote the shutoff of host protein synthesis. In addition to the mRNA cap, g5R also efficiently hydrolyzes diphosphoinositol polyphosphates. Down-regulation of the level of PP-InsP5 (diphosphoinositol pentakisphosphate) may play a role in viral manipulation of the cellular secretory pathway, a step necessary for the formation of virions. Binds viral and cellular poly(A) mRNAs, thereby decreasing both types of mRNAs. The protein is mRNA-decapping protein g5R of African swine fever virus (isolate Warthog/Namibia/Wart80/1980) (ASFV).